Reading from the N-terminus, the 256-residue chain is Small ribosomal subunit protein eS1 (256 aa).

Residues 1 to 18 (MAVGKNKRLSKGKKGVKK) are compositionally biased toward basic residues. The tract at residues 1–21 (MAVGKNKRLSKGKKGVKKRTV) is disordered. Alanine 2 is modified (N-acetylalanine; partial).

The protein belongs to the eukaryotic ribosomal protein eS1 family. In terms of assembly, component of the small ribosomal subunit. Mature ribosomes consist of a small (40S) and a large (60S) subunit. The 40S subunit contains about 33 different proteins and 1 molecule of RNA (18S). The 60S subunit contains about 49 different proteins and 3 molecules of RNA (25S, 5.8S and 5S).

The protein resides in the cytoplasm. The protein is Small ribosomal subunit protein eS1 (rps1) of Aspergillus niger (strain ATCC MYA-4892 / CBS 513.88 / FGSC A1513).